Consider the following 910-residue polypeptide: Protein translocase subunit SecA (910 aa).

ATP contacts are provided by residues Gln-87, 105 to 109 (GEGKT), and Asp-512. Basic and acidic residues-rich tracts occupy residues 561 to 571 (RHESRRIDNQL), 841 to 853 (EEER…ELAR), and 880 to 890 (TFEREARKVGR). Disordered regions lie at residues 561–584 (RHES…AGSS) and 835–910 (EEVD…GKIN). Cys-894, Cys-896, Cys-905, and His-906 together coordinate Zn(2+). Positions 900 to 910 (KKYKQCHGKIN) are enriched in basic residues.

This sequence belongs to the SecA family. In terms of assembly, monomer and homodimer. Part of the essential Sec protein translocation apparatus which comprises SecA, SecYEG and auxiliary proteins SecDF-YajC and YidC. Zn(2+) is required as a cofactor.

It localises to the cell inner membrane. Its subcellular location is the cytoplasm. It catalyses the reaction ATP + H2O + cellular proteinSide 1 = ADP + phosphate + cellular proteinSide 2.. In terms of biological role, part of the Sec protein translocase complex. Interacts with the SecYEG preprotein conducting channel. Has a central role in coupling the hydrolysis of ATP to the transfer of proteins into and across the cell membrane, serving both as a receptor for the preprotein-SecB complex and as an ATP-driven molecular motor driving the stepwise translocation of polypeptide chains across the membrane. The polypeptide is Protein translocase subunit SecA (Photobacterium profundum (strain SS9)).